A 740-amino-acid polypeptide reads, in one-letter code: ATP-dependent RNA helicase DBP7 (740 aa).

Residues methionine 1–threonine 104 are disordered. The segment covering asparagine 13 to valine 25 has biased composition (polar residues). Positions methionine 43–glutamate 60 are enriched in basic and acidic residues. The segment covering alanine 72 to glutamine 81 has biased composition (polar residues). Residues aspartate 149 to lysine 178 carry the Q motif motif. Positions proline 182–isoleucine 376 constitute a Helicase ATP-binding domain. Residue alanine 195 to threonine 202 coordinates ATP. The short motif at aspartate 311–aspartate 314 is the DEAD box element. The region spanning threonine 414–asparagine 607 is the Helicase C-terminal domain. Positions serine 695–lysine 721 are disordered. Low complexity predominate over residues glycine 697 to glutamine 711.

This sequence belongs to the DEAD box helicase family. DDX31/DBP7 subfamily.

It localises to the nucleus. It is found in the nucleolus. The enzyme catalyses ATP + H2O = ADP + phosphate + H(+). ATP-binding RNA helicase involved in the biogenesis of 60S ribosomal subunits and is required for the normal formation of 25S and 5.8S rRNAs. In Kluyveromyces lactis (strain ATCC 8585 / CBS 2359 / DSM 70799 / NBRC 1267 / NRRL Y-1140 / WM37) (Yeast), this protein is ATP-dependent RNA helicase DBP7 (DBP7).